A 317-amino-acid polypeptide reads, in one-letter code: tRNA dimethylallyltransferase (317 aa).

14–21 contributes to the ATP binding site; that stretch reads GPTASGKT. 16–21 provides a ligand contact to substrate; sequence TASGKT. 2 interaction with substrate tRNA regions span residues 39-42 and 163-167; these read DSAL and QRIQR.

This sequence belongs to the IPP transferase family. In terms of assembly, monomer. Requires Mg(2+) as cofactor.

The catalysed reaction is adenosine(37) in tRNA + dimethylallyl diphosphate = N(6)-dimethylallyladenosine(37) in tRNA + diphosphate. In terms of biological role, catalyzes the transfer of a dimethylallyl group onto the adenine at position 37 in tRNAs that read codons beginning with uridine, leading to the formation of N6-(dimethylallyl)adenosine (i(6)A). This chain is tRNA dimethylallyltransferase, found in Stenotrophomonas maltophilia (strain K279a).